Consider the following 164-residue polypeptide: V-type proton ATPase 16 kDa proteolipid subunit (164 aa).

Over 1–10 (MSDLCPPTAP) the chain is Lumenal. Residues 11 to 31 (FFGFMGAAVALIFANLGAAYG) form a helical membrane-spanning segment. Residues 32 to 53 (TAKSGVGVSSMGVMKPDLVMKS) lie on the Cytoplasmic side of the membrane. Residues 54–74 (IIPVVMAGVLGIYGLIIAVII) traverse the membrane as a helical segment. Residues 75–96 (GNGVKGPEGGKPQYSSFTGFAH) are Lumenal-facing. A helical membrane pass occupies residues 97 to 118 (LAAGLACGLSGMAAGIAIGIVG). Topologically, residues 119–130 (DAGVRASAQQAK) are cytoplasmic. A helical membrane pass occupies residues 131 to 155 (LYVGMVLILIFAEALGLYGLIVGLI). The Lumenal segment spans residues 156 to 164 (LTSKEAPCS).

This sequence belongs to the V-ATPase proteolipid subunit family. As to quaternary structure, V-ATPase is a heteromultimeric enzyme composed of a peripheral catalytic V1 complex (main components: subunits A, B, C, D, E, and F) attached to an integral membrane V0 proton pore complex (main component: the proteolipid protein; which is present as a hexamer that forms the proton-conducting pore).

It is found in the vacuole membrane. In terms of biological role, proton-conducting pore forming subunit of the membrane integral V0 complex of vacuolar ATPase. V-ATPase is responsible for acidifying a variety of intracellular compartments in eukaryotic cells. This chain is V-type proton ATPase 16 kDa proteolipid subunit (VAP), found in Chrysotila carterae (Marine alga).